We begin with the raw amino-acid sequence, 1226 residues long: Polyamine-transporting ATPase 13A3 (1226 aa).

The Cytoplasmic segment spans residues 1 to 28 (MDREERKTINQGQEDEMEIYGYNLSRWK). An intramembrane segment occupies 29–49 (LAIVSLGVICSGGFLLLLLYW). Residues 50–205 (MPEWRVKATC…IAVKVPSVFK (156 aa)) lie on the Cytoplasmic side of the membrane. Serine 98 carries the phosphoserine modification. A helical membrane pass occupies residues 206-226 (LLIKEVLNPFYIFQLFSVILW). Topologically, residues 227 to 232 (STDEYY) are lumenal. The helical transmembrane segment at 233-253 (YYALAIVVMSIVSIVSSLYSI) threads the bilayer. Residues 254–409 (RKQYVMLHDM…KPTDFKLYRD (156 aa)) lie on the Cytoplasmic side of the membrane. A helical membrane pass occupies residues 410–430 (AYLFLLCLVAVAGIGFIYTII). Residues 431–448 (NSILNEVQVGVIIIESLD) are Lumenal-facing. A helical transmembrane segment spans residues 449–469 (IITITVPPALPAAMTAGIVYA). Topologically, residues 470–940 (QRRLKKIGIF…ALITSFCVFK (471 aa)) are cytoplasmic. The active-site 4-aspartylphosphate intermediate is aspartate 498. Mg(2+) contacts are provided by aspartate 498 and threonine 500. Residues 498–500 (DKT), phenylalanine 628, arginine 684, and aspartate 750 each bind ATP. Residue serine 817 is modified to Phosphoserine. 2 residues coordinate Mg(2+): aspartate 883 and aspartate 887. 883 to 887 (DGAND) is a binding site for ATP. The chain crosses the membrane as a helical span at residues 941–961 (FMALYSIIQYFSVTLLYSILS). Residue asparagine 962 is a topological domain, lumenal. Residues 963–983 (LGDFQFLFIDLAIILVVVFTM) form a helical membrane-spanning segment. Topologically, residues 984–999 (SLNPAWKELVAQRPPS) are cytoplasmic. Residues 1000 to 1020 (GLISGALLFSVLSQIIICIGF) traverse the membrane as a helical segment. Over 1021–1073 (QSLGFFWVKQQPWYEVWHPKSDACNTTGSGFWNSSHVDNETELDEHNIQNYEN) the chain is Lumenal. The helical transmembrane segment at 1074 to 1094 (TTVFFISSFQYLIVAIAFSKG) threads the bilayer. Residues 1095–1105 (KPFRQPCYKNY) are Cytoplasmic-facing. A helical transmembrane segment spans residues 1106–1126 (FFVFSVIFLYIFILFIMLYPV). Residues 1127 to 1143 (ASVDQVLQIVCVPYQWR) lie on the Lumenal side of the membrane. The helical transmembrane segment at 1144-1164 (VTMLIIVLVNAFVSITVEESV) threads the bilayer. Residues 1165 to 1226 (DRWGKCCLPW…NGSCQIITIT (62 aa)) lie on the Cytoplasmic side of the membrane.

Belongs to the cation transport ATPase (P-type) (TC 3.A.3) family. Type V subfamily. Broadly expressed.

It localises to the recycling endosome membrane. The protein localises to the early endosome membrane. Its subcellular location is the late endosome membrane. It catalyses the reaction putrescine(out) + ATP + H2O = putrescine(in) + ADP + phosphate + H(+). Functionally, ATP-driven pump involved in endocytosis-dependent polyamine transport. Uses ATP as an energy source to transfer polyamine precursor putrescine from the endosomal compartment to the cytosol. This Homo sapiens (Human) protein is Polyamine-transporting ATPase 13A3.